A 258-amino-acid polypeptide reads, in one-letter code: Tryptophan synthase alpha chain (258 aa).

Catalysis depends on proton acceptor residues glutamate 52 and aspartate 63.

It belongs to the TrpA family. Tetramer of two alpha and two beta chains.

It catalyses the reaction (1S,2R)-1-C-(indol-3-yl)glycerol 3-phosphate + L-serine = D-glyceraldehyde 3-phosphate + L-tryptophan + H2O. It participates in amino-acid biosynthesis; L-tryptophan biosynthesis; L-tryptophan from chorismate: step 5/5. In terms of biological role, the alpha subunit is responsible for the aldol cleavage of indoleglycerol phosphate to indole and glyceraldehyde 3-phosphate. The protein is Tryptophan synthase alpha chain of Streptococcus pneumoniae (strain JJA).